The chain runs to 844 residues: Janus kinase and microtubule-interacting protein 3 (844 aa).

A coiled-coil region spans residues 8–258; that stretch reads SRAKGDKAEA…QLSQVREADR (251 aa). Residues 250 to 290 are disordered; that stretch reads LSQVREADRHPGSPRRELPHAAGAGDASDHSGSPEQQLDEK. Basic and acidic residues predominate over residues 254–268; it reads READRHPGSPRRELP. Over residues 269-282 the composition is skewed to low complexity; that stretch reads HAAGAGDASDHSGS. Residues 289–421 adopt a coiled-coil conformation; the sequence is EKDARRFQLK…DELSKTLETA (133 aa). Ser-384 is modified (phosphoserine). Positions 466–483 are enriched in polar residues; sequence SDGSSVSYQTDRTDQTPC. The interval 466–489 is disordered; that stretch reads SDGSSVSYQTDRTDQTPCTPDDDL. Coiled-coil stretches lie at residues 493–621 and 683–834; these read MAKE…RERK and VLTL…FLFL.

It belongs to the JAKMIP family. Specifically expressed in the CNS and endocrine tissues. Also detected in other tissues including heart, testis and prostate.

Its subcellular location is the golgi apparatus. The protein is Janus kinase and microtubule-interacting protein 3 (JAKMIP3) of Homo sapiens (Human).